The sequence spans 358 residues: 3-dehydroquinate synthase (358 aa).

NAD(+) is bound by residues 70-75, 104-108, 128-129, K141, K150, and 168-171; these read DGEQYK, GVIGD, TT, and CLHT. 3 residues coordinate Zn(2+): E183, H246, and H263.

Belongs to the sugar phosphate cyclases superfamily. Dehydroquinate synthase family. The cofactor is Co(2+). Zn(2+) serves as cofactor. Requires NAD(+) as cofactor.

It localises to the cytoplasm. The catalysed reaction is 7-phospho-2-dehydro-3-deoxy-D-arabino-heptonate = 3-dehydroquinate + phosphate. It functions in the pathway metabolic intermediate biosynthesis; chorismate biosynthesis; chorismate from D-erythrose 4-phosphate and phosphoenolpyruvate: step 2/7. Catalyzes the conversion of 3-deoxy-D-arabino-heptulosonate 7-phosphate (DAHP) to dehydroquinate (DHQ). The polypeptide is 3-dehydroquinate synthase (Shewanella loihica (strain ATCC BAA-1088 / PV-4)).